The following is a 150-amino-acid chain: Large ribosomal subunit protein uL15 (150 aa).

This sequence belongs to the universal ribosomal protein uL15 family. In terms of assembly, part of the 50S ribosomal subunit.

Binds to the 23S rRNA. The polypeptide is Large ribosomal subunit protein uL15 (Rickettsia prowazekii (strain Madrid E)).